A 463-amino-acid chain; its full sequence is tRNA modification GTPase MnmE (463 aa).

(6S)-5-formyl-5,6,7,8-tetrahydrofolate-binding residues include Arg27, Glu92, and Lys131. The TrmE-type G domain occupies 234–386; it reads GIKLAIVGKP…LEDHLLKIYS (153 aa). K(+) is bound at residue Asn244. GTP is bound by residues 244-249, 263-269, and 288-291; these read NVGKSS, TNVAGTT, and DTAG. Ser248 contacts Mg(2+). Residues Thr263, Val265, and Thr268 each coordinate K(+). Position 269 (Thr269) interacts with Mg(2+). Lys463 lines the (6S)-5-formyl-5,6,7,8-tetrahydrofolate pocket.

This sequence belongs to the TRAFAC class TrmE-Era-EngA-EngB-Septin-like GTPase superfamily. TrmE GTPase family. As to quaternary structure, homodimer. Heterotetramer of two MnmE and two MnmG subunits. It depends on K(+) as a cofactor.

It is found in the cytoplasm. Its function is as follows. Exhibits a very high intrinsic GTPase hydrolysis rate. Involved in the addition of a carboxymethylaminomethyl (cmnm) group at the wobble position (U34) of certain tRNAs, forming tRNA-cmnm(5)s(2)U34. The sequence is that of tRNA modification GTPase MnmE from Mycoplasmopsis synoviae (strain 53) (Mycoplasma synoviae).